Reading from the N-terminus, the 172-residue chain is Shikimate kinase 2 (172 aa).

Position 9–16 (9–16 (GARAAGKT)) interacts with ATP.

The protein belongs to the shikimate kinase family.

The protein localises to the cytoplasm. It catalyses the reaction shikimate + ATP = 3-phosphoshikimate + ADP + H(+). The protein operates within metabolic intermediate biosynthesis; chorismate biosynthesis; chorismate from D-erythrose 4-phosphate and phosphoenolpyruvate: step 5/7. This is Shikimate kinase 2 from Syntrophotalea carbinolica (strain DSM 2380 / NBRC 103641 / GraBd1) (Pelobacter carbinolicus).